Here is a 394-residue protein sequence, read N- to C-terminus: Keratin, type I cuticular Ha4 (394 aa).

The head stretch occupies residues 1 to 56 (MSYSCCLPSLGCRTSCSSRPCVPPSCHGYTLPGACNIPANVSNCNWFCEGSFNGSE). The 312-residue stretch at 56-367 (EKETMQFLND…SLLESEDCKL (312 aa)) folds into the IF rod domain. The interval 57-91 (KETMQFLNDRLASYLEKVRQLERDNAELEKLIQER) is coil 1A. Residues 92 to 102 (SQQQEPLLCPS) form a linker 1 region. The segment at 103–203 (YQSYFKTIEE…HEEEVNTLRS (101 aa)) is coil 1B. A linker 12 region spans residues 204-219 (QLGDRLNVEVDTAPTV). The tract at residues 220 to 363 (DLNQVLNETR…NTYRSLLESE (144 aa)) is coil 2. A tail region spans residues 364–394 (DCKLPCNPCATTNASGNSCGPCGTSQKGCCN).

It belongs to the intermediate filament family. Expressed in the hair follicles.

This is Keratin, type I cuticular Ha4 (KRT34) from Homo sapiens (Human).